The sequence spans 866 residues: Probable beta-glucosidase F (866 aa).

The signal sequence occupies residues 1–20 (MAAFPAYLALLSYLVPGALS). 3 N-linked (GlcNAc...) asparagine glycosylation sites follow: Asn65, Asn73, and Asn257. Asp285 is an active-site residue. 8 N-linked (GlcNAc...) asparagine glycosylation sites follow: Asn328, Asn360, Asn395, Asn421, Asn474, Asn659, Asn664, and Asn724. The segment at 725–748 (SSKTYPYPDGYTTEPKPAPRAGGA) is disordered.

Belongs to the glycosyl hydrolase 3 family.

It localises to the secreted. The catalysed reaction is Hydrolysis of terminal, non-reducing beta-D-glucosyl residues with release of beta-D-glucose.. It functions in the pathway glycan metabolism; cellulose degradation. In terms of biological role, beta-glucosidases are one of a number of cellulolytic enzymes involved in the degradation of cellulosic biomass. Catalyzes the last step releasing glucose from the inhibitory cellobiose. This is Probable beta-glucosidase F (bglF) from Aspergillus oryzae (strain ATCC 42149 / RIB 40) (Yellow koji mold).